We begin with the raw amino-acid sequence, 141 residues long: Hemoglobin subunit alpha-1 (141 aa).

The Globin domain occupies 1–141 (VLSGSDKNNV…VGNVLTAKYR (141 aa)). Residue H58 coordinates O2. H87 is a heme b binding site.

The protein belongs to the globin family. As to quaternary structure, heterotetramer of two alpha chains and two beta chains. In terms of tissue distribution, red blood cells.

Functionally, involved in oxygen transport from the lung to the various peripheral tissues. The protein is Hemoglobin subunit alpha-1 of Stercorarius maccormicki (South polar skua).